Reading from the N-terminus, the 417-residue chain is Glutamate-1-semialdehyde 2,1-aminomutase (417 aa).

Lys-263 is modified (N6-(pyridoxal phosphate)lysine).

It belongs to the class-III pyridoxal-phosphate-dependent aminotransferase family. HemL subfamily. It depends on pyridoxal 5'-phosphate as a cofactor.

Its subcellular location is the cytoplasm. It catalyses the reaction (S)-4-amino-5-oxopentanoate = 5-aminolevulinate. Its pathway is porphyrin-containing compound metabolism; protoporphyrin-IX biosynthesis; 5-aminolevulinate from L-glutamyl-tRNA(Glu): step 2/2. The polypeptide is Glutamate-1-semialdehyde 2,1-aminomutase (Methanospirillum hungatei JF-1 (strain ATCC 27890 / DSM 864 / NBRC 100397 / JF-1)).